The sequence spans 49 residues: NLCERASLTWTGNCGNTGHCDTQCRNWESAKHGACHKRGNWKCFCYFNC.

Cystine bridges form between C3–C49, C14–C35, C20–C43, and C24–C45.

This sequence belongs to the DEFL family.

The protein localises to the secreted. Its function is as follows. Possesses antimicrobial activity sensitive to inorganic cations. Binds specifically to the fungal plasma membrane. Has no inhibitory effect on insect gut alpha-amylase. The polypeptide is Defensin-like protein 1 (Clitoria ternatea (Butterfly pea)).